The chain runs to 234 residues: Purine nucleoside phosphorylase DeoD-type (234 aa).

An a purine D-ribonucleoside-binding site is contributed by histidine 5. Phosphate-binding positions include glycine 21, arginine 25, arginine 44, and 88-91; that span reads RVGT. Residues 178–180 and 202–203 contribute to the a purine D-ribonucleoside site; these read EME and SD. The Proton donor role is filled by aspartate 203.

The protein belongs to the PNP/UDP phosphorylase family. In terms of assembly, homohexamer; trimer of homodimers.

It catalyses the reaction a purine D-ribonucleoside + phosphate = a purine nucleobase + alpha-D-ribose 1-phosphate. The catalysed reaction is a purine 2'-deoxy-D-ribonucleoside + phosphate = a purine nucleobase + 2-deoxy-alpha-D-ribose 1-phosphate. In terms of biological role, catalyzes the reversible phosphorolytic breakdown of the N-glycosidic bond in the beta-(deoxy)ribonucleoside molecules, with the formation of the corresponding free purine bases and pentose-1-phosphate. The polypeptide is Purine nucleoside phosphorylase DeoD-type (Lactococcus lactis subsp. lactis (strain IL1403) (Streptococcus lactis)).